We begin with the raw amino-acid sequence, 351 residues long: sn-1 oleoyl-lipid 12-desaturase (351 aa).

The tract at residues 1 to 20 is disordered; it reads MTLSIVKSEDSSSRPSAVPS. The next 2 helical transmembrane spans lie at 44 to 62 and 68 to 88; these read AWMT…WLGI and FLLP…FVIG. A Histidine box-1 motif is present at residues 89 to 93; it reads HDCGH. A helical membrane pass occupies residues 100–120; the sequence is VWVNDWVGHILFLPIIYPFHS. Residues 125–129 carry the Histidine box-2 motif; it reads HNQHH. 2 helical membrane-spanning segments follow: residues 199–219 and 221–241; these read LLVI…IGVW and FVKF…TFTL. Residues 289-293 carry the Histidine box-3 motif; sequence HHVTT.

The protein belongs to the fatty acid desaturase type 2 family. Fe(2+) is required as a cofactor.

The protein localises to the cellular thylakoid membrane. The catalysed reaction is a 1-[(9Z)-octadecenoyl]-2-acyl-glycerolipid + 2 reduced [2Fe-2S]-[ferredoxin] + O2 + 2 H(+) = a 1-[(9Z,12Z)-octadecdienoyl]-2-acyl-glycerolipid + 2 oxidized [2Fe-2S]-[ferredoxin] + 2 H2O. Its pathway is lipid metabolism; polyunsaturated fatty acid biosynthesis. Desaturase involved in fatty acid biosynthesis. Introduces a double bond at carbon 12 of oleoyl groups (18:1) attached to the sn-1 position of the glycerol moiety of membrane glycerolipids. This Arthrospira platensis (Spirulina platensis) protein is sn-1 oleoyl-lipid 12-desaturase.